The primary structure comprises 126 residues: MAEIPQDLVYTRTHEWARIEGDAATVGITDHAQEELGDVVFVELPEVGSSVQAGEPFGTIESVKAVSDLYSPVSGEVTEVNTSLEESPEKVNEDPYGEGWLLRVRLSEEPDLLSPEEYARRLEEEE.

The region spanning 23–105 is the Lipoyl-binding domain; it reads AATVGITDHA…YGEGWLLRVR (83 aa). At K64 the chain carries N6-lipoyllysine.

Belongs to the GcvH family. The glycine cleavage system is composed of four proteins: P, T, L and H. Requires (R)-lipoate as cofactor.

The glycine cleavage system catalyzes the degradation of glycine. The H protein shuttles the methylamine group of glycine from the P protein to the T protein. The chain is Glycine cleavage system H protein from Rubrobacter xylanophilus (strain DSM 9941 / JCM 11954 / NBRC 16129 / PRD-1).